A 475-amino-acid polypeptide reads, in one-letter code: Ribulose bisphosphate carboxylase large chain (475 aa).

Positions 1–2 are excised as a propeptide; sequence MS. Pro-3 carries the N-acetylproline modification. Lys-14 carries the post-translational modification N6,N6,N6-trimethyllysine. Substrate-binding residues include Asn-123 and Thr-173. Lys-175 functions as the Proton acceptor in the catalytic mechanism. Lys-177 contributes to the substrate binding site. Lys-201, Asp-203, and Glu-204 together coordinate Mg(2+). Lys-201 bears the N6-carboxylysine mark. His-294 (proton acceptor) is an active-site residue. Residues Arg-295, His-327, and Ser-379 each coordinate substrate.

Belongs to the RuBisCO large chain family. Type I subfamily. As to quaternary structure, heterohexadecamer of 8 large chains and 8 small chains; disulfide-linked. The disulfide link is formed within the large subunit homodimers. Mg(2+) is required as a cofactor. The disulfide bond which can form in the large chain dimeric partners within the hexadecamer appears to be associated with oxidative stress and protein turnover.

It is found in the plastid. Its subcellular location is the chloroplast. It catalyses the reaction 2 (2R)-3-phosphoglycerate + 2 H(+) = D-ribulose 1,5-bisphosphate + CO2 + H2O. The enzyme catalyses D-ribulose 1,5-bisphosphate + O2 = 2-phosphoglycolate + (2R)-3-phosphoglycerate + 2 H(+). Its function is as follows. RuBisCO catalyzes two reactions: the carboxylation of D-ribulose 1,5-bisphosphate, the primary event in carbon dioxide fixation, as well as the oxidative fragmentation of the pentose substrate in the photorespiration process. Both reactions occur simultaneously and in competition at the same active site. In Pinus edulis (Pinyon pine), this protein is Ribulose bisphosphate carboxylase large chain.